The sequence spans 610 residues: tRNA uridine 5-carboxymethylaminomethyl modification enzyme MnmG (610 aa).

14 to 19 (GAGHAG) serves as a coordination point for FAD. Position 274 to 288 (274 to 288 (GPRYCPSIEDKIVKF)) interacts with NAD(+).

It belongs to the MnmG family. Homodimer. Heterotetramer of two MnmE and two MnmG subunits. FAD serves as cofactor.

The protein localises to the cytoplasm. NAD-binding protein involved in the addition of a carboxymethylaminomethyl (cmnm) group at the wobble position (U34) of certain tRNAs, forming tRNA-cmnm(5)s(2)U34. The chain is tRNA uridine 5-carboxymethylaminomethyl modification enzyme MnmG from Chlamydia trachomatis serovar A (strain ATCC VR-571B / DSM 19440 / HAR-13).